The chain runs to 715 residues: Methionine--tRNA ligase (715 aa).

Residues 17–27 (PYANGPIHLGH) carry the 'HIGH' region motif. Zn(2+)-binding residues include Cys148, Cys151, Cys161, and Cys164. Residues 359 to 363 (KMSKS) carry the 'KMSKS' region motif. Residue Lys362 coordinates ATP. One can recognise a tRNA-binding domain in the interval 614 to 715 (DLSKVELRVG…KDAKPGDRLK (102 aa)).

This sequence belongs to the class-I aminoacyl-tRNA synthetase family. MetG type 1 subfamily. Homodimer. Zn(2+) serves as cofactor.

Its subcellular location is the cytoplasm. The catalysed reaction is tRNA(Met) + L-methionine + ATP = L-methionyl-tRNA(Met) + AMP + diphosphate. In terms of biological role, is required not only for elongation of protein synthesis but also for the initiation of all mRNA translation through initiator tRNA(fMet) aminoacylation. The polypeptide is Methionine--tRNA ligase (Leptospira interrogans serogroup Icterohaemorrhagiae serovar copenhageni (strain Fiocruz L1-130)).